A 566-amino-acid polypeptide reads, in one-letter code: Putative lipase ATG15 (566 aa).

The Cytoplasmic segment spans residues 1 to 17 (MGSKHKKNASKSLRAFS). Residues 18-38 (FIILSASIALVYIFNPVKLIF) traverse the membrane as a helical; Signal-anchor for type II membrane protein segment. Topologically, residues 39–566 (PSSIIRFHHG…CVEWGDEEDA (528 aa)) are lumenal. 2 N-linked (GlcNAc...) asparagine glycosylation sites follow: N264 and N348. Residue S366 is the Charge relay system of the active site. N483 is a glycosylation site (N-linked (GlcNAc...) asparagine). Residues 507 to 545 (DSLDDEPPLPNPLRPGKPSTTSSSQHHTSTTTTTETSRP) form a disordered region. Over residues 522–543 (GKPSTTSSSQHHTSTTTTTETS) the composition is skewed to low complexity.

This sequence belongs to the AB hydrolase superfamily. Lipase family. Binds to both phosphatidylinositol (PI) and phosphatidylinositol 3,5-bisphosphate (PIP2).

It localises to the endosome. It is found in the multivesicular body membrane. The protein localises to the prevacuolar compartment membrane. The enzyme catalyses a triacylglycerol + H2O = a diacylglycerol + a fatty acid + H(+). Its function is as follows. Lipase which is essential for lysis of subvacuolar cytoplasm to vacuole targeted bodies and intravacuolar autophagic bodies. Involved in the lysis of intravacuolar multivesicular body (MVB) vesicles. The intravacuolar membrane disintegration by ATG15 is critical to life span extension. The polypeptide is Putative lipase ATG15 (ATG15) (Meyerozyma guilliermondii (strain ATCC 6260 / CBS 566 / DSM 6381 / JCM 1539 / NBRC 10279 / NRRL Y-324) (Yeast)).